Consider the following 848-residue polypeptide: Translation initiation factor IF-2 (848 aa).

The segment at 1–265 is disordered; that stretch reads MSDTDGKKPL…GNQRAEKQVR (265 aa). Residues 89 to 162 are compositionally biased toward basic and acidic residues; that stretch reads KAREVEEAAQ…AEIAKPKTEA (74 aa). Residues 163–179 show a composition bias toward low complexity; sequence RPATPADRAAAEAAAVR. The span at 191 to 219 shows a compositional bias: basic and acidic residues; that stretch reads RKTDRDRDTRGGGGDDRDSRNKGRDDSRR. The tr-type G domain maps to 346 to 514; sequence PRAPIITIMG…AIALQAEILE (169 aa). The tract at residues 355–362 is G1; the sequence is GHVDHGKT. A GTP-binding site is contributed by 355–362; sequence GHVDHGKT. Positions 380–384 are G2; sequence GITQH. Positions 402-405 are G3; sequence DTPG. GTP is bound by residues 402-406 and 456-459; these read DTPGH and NKID. The G4 stretch occupies residues 456-459; the sequence is NKID. Residues 492 to 494 form a G5 region; the sequence is SAK.

Belongs to the TRAFAC class translation factor GTPase superfamily. Classic translation factor GTPase family. IF-2 subfamily.

Its subcellular location is the cytoplasm. One of the essential components for the initiation of protein synthesis. Protects formylmethionyl-tRNA from spontaneous hydrolysis and promotes its binding to the 30S ribosomal subunits. Also involved in the hydrolysis of GTP during the formation of the 70S ribosomal complex. The sequence is that of Translation initiation factor IF-2 from Paracoccus denitrificans (strain Pd 1222).